A 59-amino-acid polypeptide reads, in one-letter code: MFFYDWYVGLNDVIYDCIAILALGCAITCLLLILHRSALHRLHLVYADGSRRYCQFAAI.

A helical; Signal-anchor for type III membrane protein membrane pass occupies residues 13–33 (VIYDCIAILALGCAITCLLLI).

Its subcellular location is the membrane. The chain is Protein ORF5a (GP5) from Equine arteritis virus (strain Bucyrus) (EAV).